We begin with the raw amino-acid sequence, 57 residues long: Enolase (57 aa).

Residue glutamate 25 is the Proton donor of the active site.

This sequence belongs to the enolase family. Mg(2+) serves as cofactor.

Its subcellular location is the cytoplasm. The protein resides in the secreted. It is found in the cell surface. It carries out the reaction (2R)-2-phosphoglycerate = phosphoenolpyruvate + H2O. Its pathway is carbohydrate degradation; glycolysis; pyruvate from D-glyceraldehyde 3-phosphate: step 4/5. Its function is as follows. Catalyzes the reversible conversion of 2-phosphoglycerate (2-PG) into phosphoenolpyruvate (PEP). It is essential for the degradation of carbohydrates via glycolysis. The polypeptide is Enolase (Clostridioides difficile (Peptoclostridium difficile)).